The primary structure comprises 52 residues: uncharacterized protein (52 aa).

This is an uncharacterized protein from Rickettsia conorii (strain ATCC VR-613 / Malish 7).